A 122-amino-acid chain; its full sequence is Large ribosomal subunit protein uL14 (122 aa).

This sequence belongs to the universal ribosomal protein uL14 family. As to quaternary structure, part of the 50S ribosomal subunit. Forms a cluster with proteins L3 and L19. In the 70S ribosome, L14 and L19 interact and together make contacts with the 16S rRNA in bridges B5 and B8.

Its function is as follows. Binds to 23S rRNA. Forms part of two intersubunit bridges in the 70S ribosome. In Afipia carboxidovorans (strain ATCC 49405 / DSM 1227 / KCTC 32145 / OM5) (Oligotropha carboxidovorans), this protein is Large ribosomal subunit protein uL14.